A 52-amino-acid polypeptide reads, in one-letter code: ATP synthase protein 8 (52 aa).

A helical membrane pass occupies residues proline 6–leucine 26.

Belongs to the ATPase protein 8 family. As to quaternary structure, F-type ATPases have 2 components, CF(1) - the catalytic core - and CF(0) - the membrane proton channel.

Its subcellular location is the mitochondrion membrane. Mitochondrial membrane ATP synthase (F(1)F(0) ATP synthase or Complex V) produces ATP from ADP in the presence of a proton gradient across the membrane which is generated by electron transport complexes of the respiratory chain. F-type ATPases consist of two structural domains, F(1) - containing the extramembraneous catalytic core and F(0) - containing the membrane proton channel, linked together by a central stalk and a peripheral stalk. During catalysis, ATP synthesis in the catalytic domain of F(1) is coupled via a rotary mechanism of the central stalk subunits to proton translocation. Part of the complex F(0) domain. Minor subunit located with subunit a in the membrane. This chain is ATP synthase protein 8 (MT-ATP8), found in Penaeus monodon (Giant tiger prawn).